The sequence spans 229 residues: uncharacterized protein (229 aa).

This is an uncharacterized protein from Dictyostelium discoideum (Social amoeba).